A 589-amino-acid polypeptide reads, in one-letter code: MAESGESGGPPGSQDSAAGAEGAGAPAAAASAEPKIMKVTVKTPKEKEEFAVPENSSVQQFKEEISKRFKSHTDQLVLIFAGKILKDQDTLSQHGIHDGLTVHLVIKTQNRPQDHSAQQTNTAGSNVTTSSTPNSNSTSGSATSNPFGLGGLGGLAGLSSLGLNTTNFSELQSQMQRQLLSNPEMMVQIMENPFVQSMLSNPDLMRQLIMANPQMQQLIQRNPEISHMLNNPDIMRQTLELARNPAMMQEMMRNQDRALSNLESIPGGYNALRRMYTDIQEPMLSAAQEQFGGNPFASLVSNTSSGEGSQPSRTENRDPLPNPWAPQTSQSSSASSGTASTVGGTTGSTASGTSGQSTTAPNLVPGVGASMFNTPGMQSLLQQITENPQLMQNMLSAPYMRSMMQSLSQNPDLAAQMMLNNPLFAGNPQLQEQMRQQLPTFLQQMQNPDTLSAMSNPRAMQALLQIQQGLQTLATEAPGLIPGFTPGLGALGSTGGSSGTNGSNATPSENTSPTAGTTEPGHQQFIQQMLQALAGVNPQLQNPEVRFQQQLEQLSAMGFLNREANLQALIATGGDINAAIERLLGSQPS.

Residues 1-11 (MAESGESGGPP) are compositionally biased toward gly residues. 2 disordered regions span residues 1–35 (MAES…AEPK) and 110–145 (NRPQ…ATSN). An N-acetylalanine modification is found at Ala-2. The segment covering 12 to 35 (GSQDSAAGAEGAGAPAAAASAEPK) has biased composition (low complexity). In terms of domain architecture, Ubiquitin-like spans 37–111 (MKVTVKTPKE…VHLVIKTQNR (75 aa)). Residues 110–124 (NRPQDHSAQQTNTAG) are compositionally biased toward polar residues. Positions 125-145 (SNVTTSSTPNSNSTSGSATSN) are enriched in low complexity. Residues 178–428 (QLLSNPEMMV…LNNPLFAGNP (251 aa)) are interaction with UBXN4. 2 consecutive STI1 domains span residues 182 to 210 (NPEM…QLIM) and 212 to 251 (NPQM…MQEM). The disordered stretch occupies residues 295–371 (PFASLVSNTS…NLVPGVGASM (77 aa)). Over residues 299–313 (LVSNTSSGEGSQPSR) the composition is skewed to polar residues. A compositionally biased stretch (low complexity) spans 327 to 360 (QTSQSSSASSGTASTVGGTTGSTASGTSGQSTTA). STI1 domains follow at residues 387–434 (NPQL…QEQM) and 438–470 (LPTF…QQGL). Residues 488 to 520 (LGALGSTGGSSGTNGSNATPSENTSPTAGTTEP) form a disordered region. A compositionally biased stretch (gly residues) spans 489 to 499 (GALGSTGGSSG). Polar residues predominate over residues 509 to 520 (ENTSPTAGTTEP). Positions 546–586 (RFQQQLEQLSAMGFLNREANLQALIATGGDINAAIERLLGS) constitute a UBA domain.

As to quaternary structure, monomer and homodimer. Heterodimer with UBQLN2. Binds CD47, NBL1, GABRA1, GABRA2, GABRA3, GABRA6, GABRB1, GABRB2 and GABRB3. Binds UBE3A, BTRC, P4HB and MTOR. Interacts with the proteasome 19S subunit. Interacts (via ubiquitin-like domain) with TREX1; the interaction is direct and may control TREX1 subcellular location. Forms a complex with UBXN4 and VCP. Interacts (via UBA domain) with UBQLN4 (via ubiquitin-like domain). Found in a complex with UBQLN2 and MAP1LC3A/B/C. The monomeric form interacts with PSEN2. The monomeric form interacts with PSEN1. Interacts with ORAI1. Interacts (via UBA domain) with TICAM1. Interacts with EPS15. Interacts (via UBA domain) with UBA52 and (via ubiquitin-like domain) with PSMD3 and PSMD4. Interacts with HERPUD1. Interacts with MAP1LC3A/B/C in the presence of UBQLN4. Interacts (via ubiquitin-like domain) with EPS15 (via UIM domains) and both the ubiquitinated and non-ubiquitinated forms can interact with EPS15. Interacts (via ubiquitin-like domain) with EPS15L1, HGS (via UIM domain) and STAM2 (via UIM domain). Interacts with BCL2L10/BCL-B; in the cytoplasm. In terms of assembly, monomeric form interacts with PSEN1. In terms of processing, degraded during both macroautophagy and during chaperone-mediated autophagy (CMA). Phosphorylated. Post-translationally, ubiquitinated. Brain (at protein level). Ubiquitous. Highly expressed throughout the brain; detected in neurons and in neuropathological lesions, such as neurofibrillary tangles and Lewy bodies. Highly expressed in heart, placenta, pancreas, lung, liver, skeletal muscle and kidney.

The protein localises to the cytoplasm. The protein resides in the nucleus. Its subcellular location is the endoplasmic reticulum. It is found in the cytoplasmic vesicle. It localises to the autophagosome. The protein localises to the cell membrane. Functionally, plays an important role in the regulation of different protein degradation mechanisms and pathways including ubiquitin-proteasome system (UPS), autophagy and endoplasmic reticulum-associated protein degradation (ERAD) pathway. Mediates the proteasomal targeting of misfolded or accumulated proteins for degradation by binding (via UBA domain) to their polyubiquitin chains and by interacting (via ubiquitin-like domain) with the subunits of the proteasome. Plays a role in the ERAD pathway via its interaction with ER-localized proteins UBXN4, VCP and HERPUD1 and may form a link between the polyubiquitinated ERAD substrates and the proteasome. Involved in the regulation of macroautophagy and autophagosome formation; required for maturation of autophagy-related protein LC3 from the cytosolic form LC3-I to the membrane-bound form LC3-II and may assist in the maturation of autophagosomes to autolysosomes by mediating autophagosome-lysosome fusion. Negatively regulates the TICAM1/TRIF-dependent toll-like receptor signaling pathway by decreasing the abundance of TICAM1 via the autophagic pathway. Promotes the ubiquitination and lysosomal degradation of ORAI1, consequently down-regulating the ORAI1-mediated Ca2+ mobilization. Suppresses the maturation and proteasomal degradation of amyloid beta A4 protein (A4) by stimulating the lysine 63 (K63)-linked polyubiquitination. Delays the maturation of A4 by sequestering it in the Golgi apparatus and preventing its transport to the cell surface for subsequent processing. Ubiquitinates BCL2L10 and thereby stabilizes protein abundance. In terms of biological role, plays a role in unfolded protein response (UPR) by attenuating the induction of UPR-inducible genes, DDTI3/CHOP, HSPA5 and PDIA2 during ER stress. Plays a key role in the regulation of the levels of PSEN1 by targeting its accumulation to aggresomes which may then be removed from cells by autophagocytosis. Plays a role in unfolded protein response (UPR) by attenuating the induction of UPR-inducible genes, DDTI3/CHOP, HSPA5 and PDIA2 during ER stress. In Homo sapiens (Human), this protein is Ubiquilin-1 (UBQLN1).